A 393-amino-acid chain; its full sequence is Probable protein phosphatase 2C 72 (393 aa).

Residues 49–357 (EFSMAVVQAN…DDITVVVVFF (309 aa)) enclose the PPM-type phosphatase domain. Residues Asp-88 and Gly-89 each coordinate Mn(2+). Residues 147–167 (LAAVGSCCLVGVICAGNLYIA) traverse the membrane as a helical segment. The Mn(2+) site is built by Asp-289 and Asp-348.

It belongs to the PP2C family. Requires Mg(2+) as cofactor. It depends on Mn(2+) as a cofactor.

The protein localises to the membrane. It catalyses the reaction O-phospho-L-seryl-[protein] + H2O = L-seryl-[protein] + phosphate. The enzyme catalyses O-phospho-L-threonyl-[protein] + H2O = L-threonyl-[protein] + phosphate. This is Probable protein phosphatase 2C 72 from Oryza sativa subsp. japonica (Rice).